We begin with the raw amino-acid sequence, 813 residues long: Protein tramtrack, alpha isoform (813 aa).

Residues 33 to 98 (TDVTLAVEGQ…MYRGEVSVDQ (66 aa)) enclose the BTB domain. 4 disordered regions span residues 118–148 (EVND…PQLQ), 171–324 (ANAG…GPSE), 356–428 (TTPA…MPKK), and 526–585 (AGLP…LDDQ). A compositionally biased stretch (low complexity) spans 125–145 (SPAAAAAGAGATGSESTATTP). Residues 176 to 187 (TPTLPVQPSLLS) are compositionally biased toward polar residues. Over residues 192-201 (PKRKRGRPRK) the composition is skewed to basic residues. Residues serine 203, serine 205, and serine 206 each carry the phosphoserine modification. Threonine 209 carries the phosphothreonine modification. Residues 254-285 (HTDDLNESRDSLPSKRSKNSKDHRVVSHHEDN) are compositionally biased toward basic and acidic residues. Polar residues-rich tracts occupy residues 302–324 (LFGS…GPSE), 356–369 (TTPA…TPTK), and 377–388 (ATGSNNSNSLLK). Basic residues predominate over residues 560–578 (SGKKGAKRPIQRRRVRRKA). 2 C2H2-type zinc fingers span residues 610-638 (YRCT…FLYH) and 646-669 (FPCP…KMTH). Phosphoserine is present on serine 682.

Interacts with CoRest/CG33525, suggesting that it acts by recruiting a CoRest-containing corepressor complex. Interacts with phyl.

The protein localises to the nucleus. Its function is as follows. Binds to a number of sites in the transcriptional regulatory region of ftz. Isoform alpha is required to repress genes that promote the R7 cell fate. Probable repressor of the transcription of the segmentation genes ftz, eve, h, odd, run, and en. May bind to the region 5'-AGGG[CT]GG-3'. Degradation of ttk is directed by binding of sinah or sina, via the adapter molecule phyl which binds to the BTB domain of ttk. This Drosophila melanogaster (Fruit fly) protein is Protein tramtrack, alpha isoform (ttk).